Here is a 547-residue protein sequence, read N- to C-terminus: Beta,beta-carotene 15,15'-dioxygenase (547 aa).

Positions 172, 237, 308, and 514 each coordinate Fe cation. Basic and acidic residues predominate over residues 528–540; it reads QAASEEQRDRASD. The tract at residues 528-547 is disordered; that stretch reads QAASEEQRDRASDCHGAPLT.

This sequence belongs to the carotenoid oxygenase family. The cofactor is Fe(2+). In terms of tissue distribution, highly expressed in retinal pigment epithelium. Also expressed in kidney, testis, liver, brain, small intestine and colon.

It is found in the cytoplasm. The protein localises to the cytosol. It carries out the reaction all-trans-beta-carotene + O2 = 2 all-trans-retinal. It functions in the pathway cofactor metabolism; retinol metabolism. Functionally, symmetrically cleaves beta-carotene into two molecules of retinal using a dioxygenase mechanism. The polypeptide is Beta,beta-carotene 15,15'-dioxygenase (Homo sapiens (Human)).